The sequence spans 388 residues: Alcohol dehydrogenase patD (388 aa).

Cysteine 46 is a Zn(2+) binding site. Histidine 47 contributes to the NAD(+) binding site. Zn(2+) is bound by residues histidine 67, glutamate 68, cysteine 101, cysteine 104, and cysteine 112. Histidine 67 contacts substrate. Residues valine 198–glycine 203, serine 295–leucine 297, and glutamate 320–alanine 322 each bind NAD(+).

The protein belongs to the zinc-containing alcohol dehydrogenase family. Zn(2+) serves as cofactor.

The protein localises to the cytoplasm. It localises to the cytosol. The catalysed reaction is neopatulin + NADPH + H(+) = (E)-ascladiol + NADP(+). It participates in mycotoxin biosynthesis; patulin biosynthesis. In terms of biological role, alcohol dehydrogenase; part of the gene cluster that mediates the biosynthesis of patulin, an acetate-derived tetraketide mycotoxin produced by several fungal species that shows antimicrobial properties against several bacteria. PatD catalyzes the conversion of neopatulin into E-ascladiol. The pathway begins with the synthesis of 6-methylsalicylic acid by the polyketide synthase (PKS) patK via condensation of acetate and malonate units. The 6-methylsalicylic acid decarboxylase patG then catalyzes the decarboxylation of 6-methylsalicylic acid to yield m-cresol (also known as 3-methylphenol). These first reactions occur in the cytosol. The intermediate m-cresol is then transported into the endoplasmic reticulum where the cytochrome P450 monooxygenase patH converts it to m-hydroxybenzyl alcohol, which is further converted to gentisyl alcohol by the cytochrome P450 monooxygenase patI. The oxidoreductases patJ and patO further convert gentisyl alcohol to isoepoxydon in the vacuole. PatN catalyzes then the transformation of isoepoxydon into phyllostine. The cluster protein patF is responsible for the conversion from phyllostine to neopatulin whereas the alcohol dehydrogenase patD converts neopatulin to E-ascladiol. The steps between isoepoxydon and E-ascladiol occur in the cytosol, and E-ascladiol is probably secreted to the extracellular space by one of the cluster-specific transporters patC or patM. Finally, the secreted patulin synthase patE catalyzes the conversion of E-ascladiol to patulin. This chain is Alcohol dehydrogenase patD, found in Aspergillus clavatus (strain ATCC 1007 / CBS 513.65 / DSM 816 / NCTC 3887 / NRRL 1 / QM 1276 / 107).